Consider the following 264-residue polypeptide: Glutamate racemase (264 aa).

Substrate-binding positions include D9–S10 and Y41–G42. C72 functions as the Proton donor/acceptor in the catalytic mechanism. N73–T74 serves as a coordination point for substrate. C183 serves as the catalytic Proton donor/acceptor. Residue T184–H185 coordinates substrate.

The protein belongs to the aspartate/glutamate racemases family.

It carries out the reaction L-glutamate = D-glutamate. It functions in the pathway cell wall biogenesis; peptidoglycan biosynthesis. Provides the (R)-glutamate required for cell wall biosynthesis. This Geobacillus kaustophilus (strain HTA426) protein is Glutamate racemase.